A 494-amino-acid chain; its full sequence is Arp2/3 complex-activating protein rickA (494 aa).

Positions 312-494 (PLENNIPPPP…RNSQKPSFVR (183 aa)) are disordered. The span at 317–357 (IPPPPPPPPPLPDNNIPPPPPPPPPLPDNNIPPPPPPPPMA) shows a compositional bias: pro residues. Positions 383 to 400 (DTSDLMREIAGPKKLKKV) constitute a WH2 domain. Residues 421-454 (VNKPSGLESIFARRVAIEMSDSSSSESDSGNWSD) are central and acidic domains. A compositionally biased stretch (low complexity) spans 440 to 456 (SDSSSSESDSGNWSDVS). A compositionally biased stretch (polar residues) spans 477-494 (THAQKINNRNSQKPSFVR).

It localises to the cell surface. In terms of biological role, recruits and activates the Arp2/3 complex, which in turn leads to actin polymerization, promoting Rickettsia motility during infection. This is Arp2/3 complex-activating protein rickA (rickA) from Rickettsia rickettsii.